The sequence spans 160 residues: 2-C-methyl-D-erythritol 2,4-cyclodiphosphate synthase (160 aa).

Residues Asp-12 and His-14 each coordinate a divalent metal cation. Residues 12-14 and 38-39 each bind 4-CDP-2-C-methyl-D-erythritol 2-phosphate; these read DVH and HS. Residue His-46 participates in a divalent metal cation binding. Residues 60–62, 65–69, 136–139, Phe-143, and Arg-146 contribute to the 4-CDP-2-C-methyl-D-erythritol 2-phosphate site; these read DIG, FPDTD, and TTTE.

Belongs to the IspF family. Homotrimer. A divalent metal cation serves as cofactor.

The catalysed reaction is 4-CDP-2-C-methyl-D-erythritol 2-phosphate = 2-C-methyl-D-erythritol 2,4-cyclic diphosphate + CMP. The protein operates within isoprenoid biosynthesis; isopentenyl diphosphate biosynthesis via DXP pathway; isopentenyl diphosphate from 1-deoxy-D-xylulose 5-phosphate: step 4/6. Functionally, involved in the biosynthesis of isopentenyl diphosphate (IPP) and dimethylallyl diphosphate (DMAPP), two major building blocks of isoprenoid compounds. Catalyzes the conversion of 4-diphosphocytidyl-2-C-methyl-D-erythritol 2-phosphate (CDP-ME2P) to 2-C-methyl-D-erythritol 2,4-cyclodiphosphate (ME-CPP) with a corresponding release of cytidine 5-monophosphate (CMP). The chain is 2-C-methyl-D-erythritol 2,4-cyclodiphosphate synthase from Acinetobacter baumannii (strain AB307-0294).